A 263-amino-acid polypeptide reads, in one-letter code: Tryptophan synthase alpha chain (263 aa).

Residues glutamate 47 and aspartate 58 each act as proton acceptor in the active site.

This sequence belongs to the TrpA family. In terms of assembly, tetramer of two alpha and two beta chains.

It localises to the plastid. The protein resides in the chloroplast. It catalyses the reaction (1S,2R)-1-C-(indol-3-yl)glycerol 3-phosphate + L-serine = D-glyceraldehyde 3-phosphate + L-tryptophan + H2O. It functions in the pathway amino-acid biosynthesis; L-tryptophan biosynthesis; L-tryptophan from chorismate: step 5/5. The alpha subunit is responsible for the aldol cleavage of indoleglycerol phosphate to indole and glyceraldehyde 3-phosphate. This chain is Tryptophan synthase alpha chain, found in Antithamnion sp. (Red alga).